Here is a 575-residue protein sequence, read N- to C-terminus: Sulfite reductase [NADPH] hemoprotein beta-component (575 aa).

[4Fe-4S] cluster-binding residues include C438, C444, C484, and C488. C488 contributes to the siroheme binding site.

It belongs to the nitrite and sulfite reductase 4Fe-4S domain family. In terms of assembly, alpha(8)-beta(8). The alpha component is a flavoprotein, the beta component is a hemoprotein. Siroheme serves as cofactor. [4Fe-4S] cluster is required as a cofactor.

The catalysed reaction is hydrogen sulfide + 3 NADP(+) + 3 H2O = sulfite + 3 NADPH + 4 H(+). It functions in the pathway sulfur metabolism; hydrogen sulfide biosynthesis; hydrogen sulfide from sulfite (NADPH route): step 1/1. Component of the sulfite reductase complex that catalyzes the 6-electron reduction of sulfite to sulfide. This is one of several activities required for the biosynthesis of L-cysteine from sulfate. The sequence is that of Sulfite reductase [NADPH] hemoprotein beta-component from Vibrio atlanticus (strain LGP32) (Vibrio splendidus (strain Mel32)).